The following is a 502-amino-acid chain: ATP synthase subunit beta (502 aa).

156-163 (GGAGVGKT) is an ATP binding site.

This sequence belongs to the ATPase alpha/beta chains family. As to quaternary structure, F-type ATPases have 2 components, CF(1) - the catalytic core - and CF(0) - the membrane proton channel. CF(1) has five subunits: alpha(3), beta(3), gamma(1), delta(1), epsilon(1). CF(0) has three main subunits: a(1), b(2) and c(9-12). The alpha and beta chains form an alternating ring which encloses part of the gamma chain. CF(1) is attached to CF(0) by a central stalk formed by the gamma and epsilon chains, while a peripheral stalk is formed by the delta and b chains.

Its subcellular location is the cell membrane. The catalysed reaction is ATP + H2O + 4 H(+)(in) = ADP + phosphate + 5 H(+)(out). Its function is as follows. Produces ATP from ADP in the presence of a proton gradient across the membrane. The catalytic sites are hosted primarily by the beta subunits. The polypeptide is ATP synthase subunit beta (Cellulophaga lytica (Cytophaga lytica)).